Consider the following 227-residue polypeptide: Ribosomal RNA large subunit methyltransferase E (227 aa).

The S-adenosyl-L-methionine site is built by Gly-78, Trp-80, Asp-103, Asp-119, and Asp-143. Catalysis depends on Lys-183, which acts as the Proton acceptor.

This sequence belongs to the class I-like SAM-binding methyltransferase superfamily. RNA methyltransferase RlmE family.

The protein resides in the cytoplasm. The catalysed reaction is uridine(2552) in 23S rRNA + S-adenosyl-L-methionine = 2'-O-methyluridine(2552) in 23S rRNA + S-adenosyl-L-homocysteine + H(+). Specifically methylates the uridine in position 2552 of 23S rRNA at the 2'-O position of the ribose in the fully assembled 50S ribosomal subunit. The protein is Ribosomal RNA large subunit methyltransferase E of Rickettsia felis (strain ATCC VR-1525 / URRWXCal2) (Rickettsia azadi).